Consider the following 578-residue polypeptide: Arginine--tRNA ligase (578 aa).

A 'HIGH' region motif is present at residues 122–132; sequence PNVAKEMHVGH.

The protein belongs to the class-I aminoacyl-tRNA synthetase family. As to quaternary structure, monomer.

It localises to the cytoplasm. It carries out the reaction tRNA(Arg) + L-arginine + ATP = L-arginyl-tRNA(Arg) + AMP + diphosphate. This is Arginine--tRNA ligase from Shigella sonnei (strain Ss046).